A 302-amino-acid chain; its full sequence is D-alanine--D-alanine ligase (302 aa).

Residues Lys-104–Glu-296 form the ATP-grasp domain. An ATP-binding site is contributed by Ala-130–Thr-183. Mg(2+)-binding residues include Asp-251, Glu-263, and Asn-265.

Belongs to the D-alanine--D-alanine ligase family. Mg(2+) serves as cofactor. It depends on Mn(2+) as a cofactor.

The protein localises to the cytoplasm. The catalysed reaction is 2 D-alanine + ATP = D-alanyl-D-alanine + ADP + phosphate + H(+). The protein operates within cell wall biogenesis; peptidoglycan biosynthesis. Functionally, cell wall formation. This chain is D-alanine--D-alanine ligase, found in Rhodospirillum rubrum (strain ATCC 11170 / ATH 1.1.1 / DSM 467 / LMG 4362 / NCIMB 8255 / S1).